An 88-amino-acid polypeptide reads, in one-letter code: Putative sulfur carrier protein AF_0554 (88 aa).

Cysteine 26 acts as the Cysteine persulfide intermediate in catalysis.

It belongs to the sulfur carrier protein TusA family.

The protein is Putative sulfur carrier protein AF_0554 of Archaeoglobus fulgidus (strain ATCC 49558 / DSM 4304 / JCM 9628 / NBRC 100126 / VC-16).